A 115-amino-acid chain; its full sequence is Replication initiation control protein YabA (115 aa).

Zn(2+)-binding residues include histidine 86, cysteine 88, cysteine 102, and cysteine 105.

This sequence belongs to the YabA family. In terms of assembly, homotetramer. Interacts with both DnaA and DnaN, acting as a bridge between these two proteins. The cofactor is Zn(2+).

It is found in the cytoplasm. The protein resides in the nucleoid. In terms of biological role, involved in control of chromosome replication initiation. Inhibits the cooperative binding of DnaA to the oriC region, thus negatively regulating initiation of chromosome replication. Inhibits the ability of DnaA-ATP to form a helix on DNA; does not disassemble preformed DnaA-DNA helices. Decreases the residence time of DnaA on the chromosome at its binding sites (oriC, replication forks and promoter-binding sites). Tethers DnaA to the replication machinery via the DNA polymerase beta sliding clamp subunit (dnaN). Associates with oriC and other DnaA targets on the chromosome in a DnaA-dependent manner. The protein is Replication initiation control protein YabA of Enterococcus faecalis (strain ATCC 700802 / V583).